We begin with the raw amino-acid sequence, 185 residues long: Elongation factor P (185 aa).

Belongs to the elongation factor P family.

Its subcellular location is the cytoplasm. It functions in the pathway protein biosynthesis; polypeptide chain elongation. Functionally, involved in peptide bond synthesis. Stimulates efficient translation and peptide-bond synthesis on native or reconstituted 70S ribosomes in vitro. Probably functions indirectly by altering the affinity of the ribosome for aminoacyl-tRNA, thus increasing their reactivity as acceptors for peptidyl transferase. This is Elongation factor P from Burkholderia ambifaria (strain MC40-6).